Consider the following 868-residue polypeptide: Protein translocase subunit SecA (868 aa).

Residues Q88, 106 to 110 (GEGKT), and D509 contribute to the ATP site. Positions 816-827 (NAENEPLNYNNQ) are enriched in polar residues. Residues 816 to 868 (NAENEPLNYNNQGEDENFTPEKKIPRNAPCPCGSGKKYKDCHGKSGPKKGIFA) are disordered. Zn(2+) contacts are provided by C845, C847, C856, and H857.

It belongs to the SecA family. In terms of assembly, monomer and homodimer. Part of the essential Sec protein translocation apparatus which comprises SecA, SecYEG and auxiliary proteins SecDF-YajC and YidC. Zn(2+) is required as a cofactor.

The protein localises to the cell inner membrane. It localises to the cytoplasm. The catalysed reaction is ATP + H2O + cellular proteinSide 1 = ADP + phosphate + cellular proteinSide 2.. Part of the Sec protein translocase complex. Interacts with the SecYEG preprotein conducting channel. Has a central role in coupling the hydrolysis of ATP to the transfer of proteins into and across the cell membrane, serving as an ATP-driven molecular motor driving the stepwise translocation of polypeptide chains across the membrane. This is Protein translocase subunit SecA from Campylobacter concisus (strain 13826).